The following is a 621-amino-acid chain: Transmembrane protein 200C (621 aa).

The interval 12–37 (ARKQDPLRPPSQIPKRKRKAKKRRKN) is disordered. Basic residues predominate over residues 25–36 (PKRKRKAKKRRK). Residues 53 to 73 (GLIALCGILVLLVGIAMAVVG) traverse the membrane as a helical segment. The interval 80–147 (GTNREGGKQL…RAASPSSSST (68 aa)) is disordered. The span at 125-147 (SSSAGAPRSTPPARAASPSSSST) shows a compositional bias: low complexity. A helical transmembrane segment spans residues 167–187 (VFGPLIMGIGIFLFICANAVL). Disordered stretches follow at residues 284–315 (WPPH…PREP), 347–368 (ASSC…QSTA), and 384–598 (LQGG…FTNK). Positions 290–303 (APSGGRPRGAASPP) are enriched in low complexity. Positions 405 to 418 (PGERGSQEIPRGEL) are enriched in basic and acidic residues. Pro residues predominate over residues 479–490 (RAPPSPEPPPSP). Low complexity-rich tracts occupy residues 491-505 (GSAD…KAAS) and 523-533 (GSSQSDDPSSS). Residues 586–595 (EQPQPVQRQF) are compositionally biased toward polar residues.

This sequence belongs to the TMEM200 family.

The protein resides in the membrane. The protein is Transmembrane protein 200C (TMEM200C) of Homo sapiens (Human).